The sequence spans 122 residues: Small ribosomal subunit protein uS10y (122 aa).

Belongs to the universal ribosomal protein uS10 family.

This is Small ribosomal subunit protein uS10y (RPS20B) from Arabidopsis thaliana (Mouse-ear cress).